Reading from the N-terminus, the 98-residue chain is Integration host factor subunit alpha (98 aa).

The interval Phe49–Asp70 is disordered.

It belongs to the bacterial histone-like protein family. As to quaternary structure, heterodimer of an alpha and a beta chain.

This protein is one of the two subunits of integration host factor, a specific DNA-binding protein that functions in genetic recombination as well as in transcriptional and translational control. The chain is Integration host factor subunit alpha from Serratia proteamaculans (strain 568).